A 285-amino-acid chain; its full sequence is Tumor necrosis factor ligand superfamily member 13B (285 aa).

At 1 to 46 (MDDSTEREQSRLTSCLKKREEMKLKECVSILPRKESPSVRSSKDGK) the chain is on the cytoplasmic side. A helical; Signal-anchor for type II membrane protein transmembrane segment spans residues 47-67 (LLAATLLLALLSCCLTVVSFY). The Extracellular segment spans residues 68–285 (QVAALQGDLA…VTFFGALKLL (218 aa)). Positions 114–138 (IFEPPAPGEGNSSQNSRNKRAVQGP) are disordered. N-linked (GlcNAc...) asparagine glycosylation is present at Asn-124. In terms of domain architecture, THD spans 145–284 (DCLQLIADSE…DVTFFGALKL (140 aa)). A disulfide bridge connects residues Cys-232 and Cys-245. Asn-242 is a glycosylation site (N-linked (GlcNAc...) (high mannose) asparagine).

The protein belongs to the tumor necrosis factor family. In terms of assembly, homotrimer. Isoform 2 heteromultimerizes with isoform 1, probably limiting the amount of functional isoform 1 on the cell surface. Isoform 3 is unlikely form trimers or bind to BAFF receptors. Post-translationally, the soluble form derives from the membrane form by proteolytic processing. In terms of processing, isoform 2 is not efficiently shed from the membrane unlike isoform 1. N-glycosylated. In terms of tissue distribution, abundantly expressed in peripheral blood Leukocytes and is specifically expressed in monocytes and macrophages. Also found in the spleen, lymph node, bone marrow, T-cells and dendritic cells. A lower expression seen in placenta, heart, lung, fetal liver, thymus, and pancreas. Isoform 2 is expressed in many myeloid cell lines.

The protein localises to the cell membrane. It localises to the secreted. Its function is as follows. Cytokine that binds to TNFRSF13B/TACI and TNFRSF17/BCMA. TNFSF13/APRIL binds to the same 2 receptors. Together, they form a 2 ligands -2 receptors pathway involved in the stimulation of B- and T-cell function and the regulation of humoral immunity. A third B-cell specific BAFF-receptor (BAFFR/BR3) promotes the survival of mature B-cells and the B-cell response. In terms of biological role, isoform 2 seems to inhibit isoform 1 secretion and bioactivity. Functionally, acts as a transcription factor for its own parent gene, in association with NF-kappa-B p50 subunit, at least in autoimmune and proliferative B-cell diseases. The presence of Delta4BAFF is essential for soluble BAFF release by IFNG/IFN-gamma-stimulated monocytes and for B-cell survival. It can directly or indirectly regulate the differential expression of a large number of genes involved in the innate immune response and the regulation of apoptosis. In Homo sapiens (Human), this protein is Tumor necrosis factor ligand superfamily member 13B (TNFSF13B).